The sequence spans 1509 residues: Dynein axonemal assembly factor 1 homolog (1509 aa).

6 LRR repeats span residues 34-56, 57-78, 79-100, 101-122, 125-146, and 150-171; these read RLND…EEYT, ELKC…EKLS, KLKC…EPCR, ELDT…GTNI, VLNT…SDLV, and TLSV…KIFE. Residues 185-223 form the LRRCT domain; it reads PVVSRLPQYRKTLILACKELTYLDSRPVFPRDRACAEAW. 4 disordered regions span residues 252 to 280, 306 to 327, 962 to 1008, and 1103 to 1122; these read CTIR…DDTC, HPTS…ATSS, SGDL…DSKN, and TLQT…KLRN. The segment covering 309 to 318 has biased composition (low complexity); it reads SESGASTSSS. The span at 978 to 990 shows a compositional bias: acidic residues; the sequence is SESEDYDTADDEY. Positions 1103 to 1112 are enriched in polar residues; it reads TLQTSFSTVG.

It belongs to the DNAAF1 family.

The protein resides in the cell projection. The protein localises to the cilium. Functionally, cilium-specific protein required for cilia structures. The polypeptide is Dynein axonemal assembly factor 1 homolog (dtr) (Drosophila yakuba (Fruit fly)).